Here is a 101-residue protein sequence, read N- to C-terminus: Large ribosomal subunit protein uL23 (101 aa).

It belongs to the universal ribosomal protein uL23 family. As to quaternary structure, part of the 50S ribosomal subunit. Contacts protein L29, and trigger factor when it is bound to the ribosome.

Its function is as follows. One of the early assembly proteins it binds 23S rRNA. One of the proteins that surrounds the polypeptide exit tunnel on the outside of the ribosome. Forms the main docking site for trigger factor binding to the ribosome. This Kocuria rhizophila (strain ATCC 9341 / DSM 348 / NBRC 103217 / DC2201) protein is Large ribosomal subunit protein uL23.